The chain runs to 603 residues: Isocitrate dehydrogenase kinase/phosphatase (603 aa).

Residues 327-333 (APGIKGL) and K348 contribute to the ATP site. The active site involves D383.

Belongs to the AceK family.

It is found in the cytoplasm. It carries out the reaction L-seryl-[isocitrate dehydrogenase] + ATP = O-phospho-L-seryl-[isocitrate dehydrogenase] + ADP + H(+). In terms of biological role, bifunctional enzyme which can phosphorylate or dephosphorylate isocitrate dehydrogenase (IDH) on a specific serine residue. This is a regulatory mechanism which enables bacteria to bypass the Krebs cycle via the glyoxylate shunt in response to the source of carbon. When bacteria are grown on glucose, IDH is fully active and unphosphorylated, but when grown on acetate or ethanol, the activity of IDH declines drastically concomitant with its phosphorylation. The protein is Isocitrate dehydrogenase kinase/phosphatase of Burkholderia thailandensis (strain ATCC 700388 / DSM 13276 / CCUG 48851 / CIP 106301 / E264).